The primary structure comprises 461 residues: tRNA modification GTPase MnmE (461 aa).

Residues Arg-23, Glu-84, and Arg-123 each contribute to the (6S)-5-formyl-5,6,7,8-tetrahydrofolate site. A TrmE-type G domain is found at 216-383 (GARAALIGRP…LGATVARLLL (168 aa)). Residue Asn-226 coordinates K(+). Residues 226–231 (NAGKSS), 245–251 (TPIPGTT), and 270–273 (DTAG) each bind GTP. Residue Ser-230 coordinates Mg(2+). K(+) is bound by residues Thr-245, Ile-247, and Thr-250. Thr-251 contacts Mg(2+). Lys-461 lines the (6S)-5-formyl-5,6,7,8-tetrahydrofolate pocket.

It belongs to the TRAFAC class TrmE-Era-EngA-EngB-Septin-like GTPase superfamily. TrmE GTPase family. As to quaternary structure, homodimer. Heterotetramer of two MnmE and two MnmG subunits. K(+) is required as a cofactor.

Its subcellular location is the cytoplasm. Its function is as follows. Exhibits a very high intrinsic GTPase hydrolysis rate. Involved in the addition of a carboxymethylaminomethyl (cmnm) group at the wobble position (U34) of certain tRNAs, forming tRNA-cmnm(5)s(2)U34. This is tRNA modification GTPase MnmE from Roseiflexus sp. (strain RS-1).